A 484-amino-acid polypeptide reads, in one-letter code: Keratin, type I cytoskeletal 14 (484 aa).

Residues 1-20 form a disordered region; sequence MATCSRQFTSSSSMKGSCGI. The segment at 1–120 is head; the sequence is MATCSRQFTS…GIGDGLLVGS (120 aa). Positions 121 to 156 are coil 1A; sequence EKVTMQNLNDRLATYLDKVRALEEANTELEVKIRDW. The region spanning 121–432 is the IF rod domain; the sequence is EKVTMQNLND…RLLEGEDAHL (312 aa). The tract at residues 157–174 is linker 1; sequence YQRQRPTEIKDYSPYFKT. The tract at residues 175 to 266 is coil 1B; that stretch reads IEDLKSKILA…KNHEEEMASM (92 aa). Positions 267-289 are linker 12; it reads RGQVGGDVNVEMDAAPGVDLSRI. Residues 290 to 428 are coil 2; that stretch reads LNEMRDQYEK…ATYRRLLEGE (139 aa). A tail region spans residues 429–484; that stretch reads DAHLSSSQFSSSSQFSSGSQSSRDVTSTNRQIRTKVMDVHDGKVVSTHEQVLRTKN. Residues 431–484 form an interaction with Type I keratins and keratin filaments region; it reads HLSSSQFSSSSQFSSGSQSSRDVTSTNRQIRTKVMDVHDGKVVSTHEQVLRTKN. Positions 435-450 are enriched in low complexity; it reads SQFSSSSQFSSGSQSS. The disordered stretch occupies residues 435-457; sequence SQFSSSSQFSSGSQSSRDVTSTN. Ser-447 carries the post-translational modification Phosphoserine.

It belongs to the intermediate filament family. As to quaternary structure, heterotetramer of two type I and two type II keratins. Forms a disulfide-linked heterodimer (via 2B domains) with KRT5 (via 2B domains). Forms a heterodimer with KRT1; the interaction is more abundant in the absence of KRT5. Interacts with PLEC isoform 1C, when in a heterodimer with KRT5. Interacts with TRADD and with keratin filaments. Associates with other type I keratins. Interacts with EPPK1. Interacts with KLHL24. Interacts with PKP1 (via N-terminus) and PKP2. In terms of processing, a disulfide bond is formed between rather than within filaments and promotes the formation of a keratin filament cage around the nucleus. Post-translationally, ubiquitinated by the BCR(KLHL24) E3 ubiquitin ligase complex. Expressed in the corneal epithelium (at protein level). Expressed in the basal layer of the epidermis and the outer root sheath of hair follicles (at protein level). Expressed in the epithelial basal layer in the tail epidermis. Expressed in the parabasal cell row, basal cell layer, and suprabasal epithelial layer of the tongue.

It is found in the cytoplasm. It localises to the nucleus. Its function is as follows. The nonhelical tail domain is involved in promoting KRT5-KRT14 filaments to self-organize into large bundles and enhances the mechanical properties involved in resilience of keratin intermediate filaments in vitro. The sequence is that of Keratin, type I cytoskeletal 14 (Krt14) from Mus musculus (Mouse).